The chain runs to 139 residues: D-ribose pyranase (139 aa).

Residue histidine 20 is the Proton donor of the active site. Substrate is bound by residues aspartate 28, histidine 106, and 128-130 (YAN).

Belongs to the RbsD / FucU family. RbsD subfamily. In terms of assembly, homodecamer.

It localises to the cytoplasm. The enzyme catalyses beta-D-ribopyranose = beta-D-ribofuranose. It participates in carbohydrate metabolism; D-ribose degradation; D-ribose 5-phosphate from beta-D-ribopyranose: step 1/2. In terms of biological role, catalyzes the interconversion of beta-pyran and beta-furan forms of D-ribose. This is D-ribose pyranase from Escherichia coli O45:K1 (strain S88 / ExPEC).